The sequence spans 86 residues: Large ribosomal subunit protein uL23 (86 aa).

The protein belongs to the universal ribosomal protein uL23 family. As to quaternary structure, part of the 50S ribosomal subunit. Contacts protein L29.

Functionally, binds to 23S rRNA. One of the proteins that surrounds the polypeptide exit tunnel on the outside of the ribosome. The chain is Large ribosomal subunit protein uL23 from Methanococcus maripaludis (strain C5 / ATCC BAA-1333).